Here is a 135-residue protein sequence, read N- to C-terminus: Transcription antitermination protein NusB (135 aa).

The protein belongs to the NusB family.

Functionally, involved in transcription antitermination. Required for transcription of ribosomal RNA (rRNA) genes. Binds specifically to the boxA antiterminator sequence of the ribosomal RNA (rrn) operons. The sequence is that of Transcription antitermination protein NusB from Clostridium acetobutylicum (strain ATCC 824 / DSM 792 / JCM 1419 / IAM 19013 / LMG 5710 / NBRC 13948 / NRRL B-527 / VKM B-1787 / 2291 / W).